Here is a 117-residue protein sequence, read N- to C-terminus: Large ribosomal subunit protein bL20 (117 aa).

This sequence belongs to the bacterial ribosomal protein bL20 family.

In terms of biological role, binds directly to 23S ribosomal RNA and is necessary for the in vitro assembly process of the 50S ribosomal subunit. It is not involved in the protein synthesizing functions of that subunit. This Trichlorobacter lovleyi (strain ATCC BAA-1151 / DSM 17278 / SZ) (Geobacter lovleyi) protein is Large ribosomal subunit protein bL20.